An 85-amino-acid polypeptide reads, in one-letter code: UPF0386 protein Arad_1912 (85 aa).

This sequence belongs to the UPF0386 family.

The polypeptide is UPF0386 protein Arad_1912 (Rhizobium rhizogenes (strain K84 / ATCC BAA-868) (Agrobacterium radiobacter)).